The sequence spans 123 residues: Small ribosomal subunit protein uS12c (123 aa).

Positions 103-123 are disordered; it reads AAGVKNRKQSRSKYGAKKPKE. Positions 107-123 are enriched in basic residues; that stretch reads KNRKQSRSKYGAKKPKE.

It belongs to the universal ribosomal protein uS12 family. As to quaternary structure, part of the 30S ribosomal subunit.

It is found in the plastid. The protein localises to the chloroplast. Functionally, with S4 and S5 plays an important role in translational accuracy. Located at the interface of the 30S and 50S subunits. This Guillardia theta (Cryptophyte) protein is Small ribosomal subunit protein uS12c (rps12).